The following is a 378-amino-acid chain: UDP-N-acetylglucosamine--N-acetylmuramyl-(pentapeptide) pyrophosphoryl-undecaprenol N-acetylglucosamine transferase (378 aa).

UDP-N-acetyl-alpha-D-glucosamine contacts are provided by residues 13-15 (TGG), N124, R165, S193, and Q294.

The protein belongs to the glycosyltransferase 28 family. MurG subfamily.

Its subcellular location is the cell inner membrane. It catalyses the reaction di-trans,octa-cis-undecaprenyl diphospho-N-acetyl-alpha-D-muramoyl-L-alanyl-D-glutamyl-meso-2,6-diaminopimeloyl-D-alanyl-D-alanine + UDP-N-acetyl-alpha-D-glucosamine = di-trans,octa-cis-undecaprenyl diphospho-[N-acetyl-alpha-D-glucosaminyl-(1-&gt;4)]-N-acetyl-alpha-D-muramoyl-L-alanyl-D-glutamyl-meso-2,6-diaminopimeloyl-D-alanyl-D-alanine + UDP + H(+). Its pathway is cell wall biogenesis; peptidoglycan biosynthesis. Cell wall formation. Catalyzes the transfer of a GlcNAc subunit on undecaprenyl-pyrophosphoryl-MurNAc-pentapeptide (lipid intermediate I) to form undecaprenyl-pyrophosphoryl-MurNAc-(pentapeptide)GlcNAc (lipid intermediate II). This is UDP-N-acetylglucosamine--N-acetylmuramyl-(pentapeptide) pyrophosphoryl-undecaprenol N-acetylglucosamine transferase from Agrobacterium fabrum (strain C58 / ATCC 33970) (Agrobacterium tumefaciens (strain C58)).